Here is a 438-residue protein sequence, read N- to C-terminus: ATP synthase subunit alpha, chloroplastic (438 aa).

170-177 (GDRQTGKT) is an ATP binding site.

This sequence belongs to the ATPase alpha/beta chains family. As to quaternary structure, F-type ATPases have 2 components, CF(1) - the catalytic core - and CF(0) - the membrane proton channel. CF(1) has five subunits: alpha(3), beta(3), gamma(1), delta(1), epsilon(1). CF(0) has four main subunits: a, b, b' and c.

The protein resides in the plastid. It localises to the chloroplast thylakoid membrane. It carries out the reaction ATP + H2O + 4 H(+)(in) = ADP + phosphate + 5 H(+)(out). Its function is as follows. Produces ATP from ADP in the presence of a proton gradient across the membrane. The alpha chain is a regulatory subunit. This Ochrosphaera neapolitana protein is ATP synthase subunit alpha, chloroplastic.